Here is a 281-residue protein sequence, read N- to C-terminus: Acyl-[acyl-carrier-protein]--UDP-N-acetylglucosamine O-acyltransferase (281 aa).

Belongs to the transferase hexapeptide repeat family. LpxA subfamily. As to quaternary structure, homotrimer.

Its subcellular location is the cytoplasm. It carries out the reaction a (3R)-hydroxyacyl-[ACP] + UDP-N-acetyl-alpha-D-glucosamine = a UDP-3-O-[(3R)-3-hydroxyacyl]-N-acetyl-alpha-D-glucosamine + holo-[ACP]. Its pathway is glycolipid biosynthesis; lipid IV(A) biosynthesis; lipid IV(A) from (3R)-3-hydroxytetradecanoyl-[acyl-carrier-protein] and UDP-N-acetyl-alpha-D-glucosamine: step 1/6. In terms of biological role, involved in the biosynthesis of lipid A, a phosphorylated glycolipid that anchors the lipopolysaccharide to the outer membrane of the cell. The protein is Acyl-[acyl-carrier-protein]--UDP-N-acetylglucosamine O-acyltransferase of Rickettsia bellii (strain OSU 85-389).